The following is a 914-amino-acid chain: Linoleate 13S-lipoxygenase 3-1, chloroplastic (914 aa).

The transit peptide at methionine 1–arginine 83 directs the protein to the chloroplast. The 123-residue stretch at leucine 96–serine 218 folds into the PLAT domain. The Lipoxygenase domain maps to proline 221–isoleucine 914. Fe cation contacts are provided by histidine 574, histidine 579, histidine 765, asparagine 769, and isoleucine 914.

Belongs to the lipoxygenase family. In terms of assembly, monomer. Fe cation is required as a cofactor. As to expression, expressed in roots and leaves. Detected in tubers and flower buds.

Its subcellular location is the plastid. The protein resides in the chloroplast stroma. It localises to the chloroplast thylakoid. The enzyme catalyses (9Z,12Z)-octadecadienoate + O2 = (13S)-hydroperoxy-(9Z,11E)-octadecadienoate. The catalysed reaction is (9Z,12Z,15Z)-octadecatrienoate + O2 = (13S)-hydroperoxy-(9Z,11E,15Z)-octadecatrienoate. The protein operates within lipid metabolism; oxylipin biosynthesis. Functionally, plant lipoxygenases may be involved in a number of diverse aspects of plant physiology including growth and development, pest resistance, and senescence or responses to wounding. Required for the regulation of wound-induced gene expression, but is not involved in the bulk production of jasmonate upon wounding. Catalyzes the hydroperoxidation of lipids containing a cis,cis-1,4-pentadiene structure. Linolenic acid is the preferred substrate, before linoleic and arachidonic acids. This Solanum tuberosum (Potato) protein is Linoleate 13S-lipoxygenase 3-1, chloroplastic (LOX3.1).